A 70-amino-acid polypeptide reads, in one-letter code: Putative membrane protein insertion efficiency factor (70 aa).

The protein belongs to the UPF0161 family.

The protein localises to the cell inner membrane. Could be involved in insertion of integral membrane proteins into the membrane. This is Putative membrane protein insertion efficiency factor from Rhizorhabdus wittichii (strain DSM 6014 / CCUG 31198 / JCM 15750 / NBRC 105917 / EY 4224 / RW1) (Sphingomonas wittichii).